A 147-amino-acid polypeptide reads, in one-letter code: Hemoglobin subunit beta (147 aa).

An N-acetylvaline modification is found at Val2. A Globin domain is found at 3–147 (NLTSDEKTAV…VANALAHKYH (145 aa)). Residue Ser45 is modified to Phosphoserine. Lys60 is modified (N6-acetyllysine). His64 provides a ligand contact to heme b. Lys83 carries the post-translational modification N6-acetyllysine. Residue His93 coordinates heme b. At Cys94 the chain carries S-nitrosocysteine. Residue Lys145 is modified to N6-acetyllysine.

The protein belongs to the globin family. In terms of assembly, heterotetramer of two alpha chains and two beta chains. As to expression, red blood cells.

Involved in oxygen transport from the lung to the various peripheral tissues. The chain is Hemoglobin subunit beta (HBB) from Dasypus novemcinctus (Nine-banded armadillo).